We begin with the raw amino-acid sequence, 354 residues long: Kelch domain-containing protein 8B (354 aa).

8 Kelch repeats span residues Met1–Gly31, His32–Lys79, Val81–Gly127, Met128–Asn175, Lys176–Gly222, Val224–Asp281, His282–Pro329, and Leu331–Val354.

The protein localises to the cytoplasm. It is found in the midbody. Its function is as follows. Involved in pinching off the separated nuclei at the cleavage furrow and in cytokinesis. Required for mitotic integrity and maintenance of chromosomal stability. Protects cells against mitotic errors, centrosomal amplification, micronucleus formation and aneuploidy. Plays a key role of midbody function involving abscission of the daughter cells during cytokinesis and appropriate chromosomal and nuclear segregation into the daughter cells. This is Kelch domain-containing protein 8B (KLHDC8B) from Bos taurus (Bovine).